Consider the following 315-residue polypeptide: Microtubule-associated protein Jupiter (315 aa).

Positions 1 to 14 (MISNFDCTDNQASS) are enriched in polar residues. Disordered stretches follow at residues 1 to 37 (MISN…QTPR) and 51 to 89 (EKDN…PGKN). Residue Ser24 is modified to Phosphoserine. Thr35 is subject to Phosphothreonine. The segment covering 62–76 (APRRGQKTVDSHSRL) has biased composition (basic and acidic residues). 2 positions are modified to phosphothreonine: Thr81 and Thr85. 3 positions are modified to phosphoserine: Ser94, Ser122, and Ser133. Disordered regions lie at residues 116–166 (YNGK…ADDA) and 272–315 (EGNP…SGLW). A compositionally biased stretch (low complexity) spans 120–133 (SGSVSSASSSVSSS). Polar residues-rich tracts occupy residues 134–148 (TENL…SVFR) and 285–296 (DFTQRQESSNGG).

The protein belongs to the MAP Jupiter family.

It localises to the nucleus. Its subcellular location is the cytoplasm. It is found in the cytoskeleton. The protein resides in the spindle. Binds to all microtubule populations. This chain is Microtubule-associated protein Jupiter, found in Drosophila sechellia (Fruit fly).